We begin with the raw amino-acid sequence, 253 residues long: Imidazole glycerol phosphate synthase subunit HisF (253 aa).

Residues Asp11 and Asp130 contribute to the active site.

It belongs to the HisA/HisF family. In terms of assembly, heterodimer of HisH and HisF.

The protein resides in the cytoplasm. The catalysed reaction is 5-[(5-phospho-1-deoxy-D-ribulos-1-ylimino)methylamino]-1-(5-phospho-beta-D-ribosyl)imidazole-4-carboxamide + L-glutamine = D-erythro-1-(imidazol-4-yl)glycerol 3-phosphate + 5-amino-1-(5-phospho-beta-D-ribosyl)imidazole-4-carboxamide + L-glutamate + H(+). It participates in amino-acid biosynthesis; L-histidine biosynthesis; L-histidine from 5-phospho-alpha-D-ribose 1-diphosphate: step 5/9. Functionally, IGPS catalyzes the conversion of PRFAR and glutamine to IGP, AICAR and glutamate. The HisF subunit catalyzes the cyclization activity that produces IGP and AICAR from PRFAR using the ammonia provided by the HisH subunit. This chain is Imidazole glycerol phosphate synthase subunit HisF, found in Roseobacter denitrificans (strain ATCC 33942 / OCh 114) (Erythrobacter sp. (strain OCh 114)).